The sequence spans 256 residues: DNA repair protein RecO (256 aa).

The protein belongs to the RecO family.

In terms of biological role, involved in DNA repair and RecF pathway recombination. The polypeptide is DNA repair protein RecO (Anaeromyxobacter sp. (strain Fw109-5)).